Consider the following 119-residue polypeptide: Beta-2-microglobulin (119 aa).

The signal sequence occupies residues 1-20; that stretch reads MARFVVAALLVLLCLSGLEA. One can recognise an Ig-like C1-type domain in the interval 25-114; sequence PKIQVYSRHP…VTFPTPKTVK (90 aa). A disulfide bridge connects residues Cys45 and Cys100.

The protein belongs to the beta-2-microglobulin family. In terms of assembly, heterodimer of an alpha chain and a beta chain. Beta-2-microglobulin is the beta-chain of major histocompatibility complex class I molecules.

The protein resides in the secreted. Its function is as follows. Component of the class I major histocompatibility complex (MHC). Involved in the presentation of peptide antigens to the immune system. The protein is Beta-2-microglobulin (B2M) of Cebus albifrons (White-fronted capuchin).